An 81-amino-acid polypeptide reads, in one-letter code: LYR motif-containing protein At3g19508 (81 aa).

The protein belongs to the complex I LYR family. LYRM9 subfamily.

This Arabidopsis thaliana (Mouse-ear cress) protein is LYR motif-containing protein At3g19508.